A 622-amino-acid chain; its full sequence is Leucine-rich repeat and immunoglobulin-like domain-containing nogo receptor-interacting protein 1-B (622 aa).

A signal peptide spans 1-43 (MTFLQVTIKMVAREASGHSYLVACWQPILILMLGTVLSGSATG). Intrachain disulfides connect Cys-44–Cys-50 and Cys-48–Cys-59. Residues 44 to 73 (CPSRCECSAQERSVVCHRRKLITLPEGIPI) form the LRRNT domain. At 44 to 563 (CPSRCECSAQ…FDMKTLIIAT (520 aa)) the chain is on the extracellular side. LRR repeat units follow at residues 74–95 (DTRL…EFLN), 98–119 (QLED…AFSN), 122–143 (GLRT…VFTG), 146–167 (NLTR…MFQE), 170–191 (NLKE…AFHG), 194–215 (SLEQ…AFSH), 218–239 (NLLT…SFRR), 266–287 (NITT…AIQH), 290–311 (YLRF…KMHN), 314–335 (RLQA…SFKG), and 338–359 (YLRV…AFHS). An N-linked (GlcNAc...) asparagine glycan is attached at Asn-146. N-linked (GlcNAc...) asparagine glycosylation occurs at Asn-204. Residues Asn-266, Asn-276, and Asn-295 are each glycosylated (N-linked (GlcNAc...) asparagine). Asn-343 is a glycosylation site (N-linked (GlcNAc...) asparagine). One can recognise an LRRCT domain in the interval 371 to 425 (NPLACDCRLLWVFRRRWRLNFNRQQPSCETPEFLQGKEFKDFPDVLPPNYFTCQK). 3 disulfide bridges follow: Cys-375–Cys-398, Cys-377–Cys-423, and Cys-448–Cys-499. Residues 413–515 (PDVLPPNYFT…GNDTRLAHLH (103 aa)) form the Ig-like C2-type domain. Residues Asn-494, Asn-507, Asn-528, and Asn-544 are each glycosylated (N-linked (GlcNAc...) asparagine). A helical transmembrane segment spans residues 564-584 (TMGFISFLGVVLFCLVLLFLW). The Cytoplasmic portion of the chain corresponds to 585–622 (SRGKGNAKPNIEIEYVPRKVDGENSPNEGSHKISMKMI).

The protein localises to the cell membrane. In terms of biological role, may play a role in regulating axonal regeneration and plasticity in the adult central nervous system. The chain is Leucine-rich repeat and immunoglobulin-like domain-containing nogo receptor-interacting protein 1-B (lingo1b) from Danio rerio (Zebrafish).